The primary structure comprises 276 residues: Pirin-like protein CC_0481 (276 aa).

This sequence belongs to the pirin family.

The protein is Pirin-like protein CC_0481 of Caulobacter vibrioides (strain ATCC 19089 / CIP 103742 / CB 15) (Caulobacter crescentus).